Consider the following 121-residue polypeptide: Large ribosomal subunit protein uL14 (121 aa).

It belongs to the universal ribosomal protein uL14 family. As to quaternary structure, part of the 50S ribosomal subunit. Forms a cluster with proteins L3 and L19. In the 70S ribosome, L14 and L19 interact and together make contacts with the 16S rRNA in bridges B5 and B8.

Its function is as follows. Binds to 23S rRNA. Forms part of two intersubunit bridges in the 70S ribosome. This Prochlorococcus marinus (strain SARG / CCMP1375 / SS120) protein is Large ribosomal subunit protein uL14.